Here is a 1059-residue protein sequence, read N- to C-terminus: Microtubule-associated protein 1S (1059 aa).

The tract at residues 1–797 (MAAVAGSGAA…SESLPTLSDS (797 aa)) is necessary for the microtubule-organizing center localization. Phosphoserine occurs at positions 321 and 472. Disordered stretches follow at residues 461-733 (PQDL…ASPH) and 751-942 (VPMA…SATP). Composition is skewed to basic and acidic residues over residues 466–486 (GPGR…KREG) and 494–530 (PGQE…KDPK). Residues 547-557 (SVPNLKKTNAQ) show a composition bias toward polar residues. At Ser-582 the chain carries Phosphoserine. A compositionally biased stretch (low complexity) spans 591–603 (ASPPSAACGSPAS). Phosphothreonine is present on Thr-638. The residue at position 640 (Ser-640) is a Phosphoserine. Over residues 642-652 (ESHRSPAEGSE) the composition is skewed to basic and acidic residues. Phosphoserine occurs at positions 655 and 657. The segment at 666-1059 (PDASPTVTTP…DAFPACKVEF (394 aa)) is necessary for interaction with RASSF1 isoform A and isoform C. Residues 670–680 (PTVTTPTVTTP) are compositionally biased toward low complexity. Residues 714–966 (EAGLSLPLRG…GSSAHLVDEE (253 aa)) form a necessary for association with microtubules region. Ser-731 and Ser-759 each carry phosphoserine. Over residues 759–769 (SPGSSNDSSAR) the composition is skewed to low complexity. Residues 783–796 (PPTSVSESLPTLSD) are compositionally biased toward polar residues. Ser-809 carries the phosphoserine modification. A compositionally biased stretch (pro residues) spans 825–836 (PDPLKVPPPLPD). 2 stretches are compositionally biased toward low complexity: residues 873 to 887 (AAAP…AKTK) and 923 to 936 (TATR…SSRP). The interval 960 to 1059 (AHLVDEEFFQ…DAFPACKVEF (100 aa)) is necessary for association with actin. The tract at residues 967 to 991 (FFQRVRALCYVISGQDQRKEEGMRA) is necessary for the mitochondrial aggregation and genome destruction.

It belongs to the MAP1 family. In terms of assembly, heterodimer of a heavy and a light chain. Interacts with microtubules and actin. Both MAP1S heavy and light chains interact with microtubules. MAP1S light chain interacts with actin. Interacts (via C-terminus) with GAN (via Kelch domains). Interacts with ESR1, LRPPRC, RASSF1 isoform A and isoform C, microtubules and VCY2. Interacts with WDR47 (via N-terminus of light chain). In terms of tissue distribution, expressed in neurons (at protein level). Expressed in spermatocytes, spermatids and spermatozoa. Expressed in the cerebral cortex. Highly expressed in testis. Moderately expressed in the brain, colon, heart, kidney, liver, lung, placenta, small intestine, spleen and stomach. Weakly expressed in muscle.

Its subcellular location is the nucleus. It is found in the cytoplasm. The protein resides in the cytosol. It localises to the cytoskeleton. The protein localises to the spindle. Microtubule-associated protein that mediates aggregation of mitochondria resulting in cell death and genomic destruction (MAGD). Plays a role in anchoring the microtubule organizing center to the centrosomes. Binds to DNA. Plays a role in apoptosis. Involved in the formation of microtubule bundles. The chain is Microtubule-associated protein 1S (MAP1S) from Homo sapiens (Human).